We begin with the raw amino-acid sequence, 769 residues long: Integrin beta-2 (769 aa).

An N-terminal signal peptide occupies residues methionine 1–serine 22. Residue glutamine 23 is modified to Pyrrolidone carboxylic acid. Over glutamine 23–asparagine 700 the chain is Extracellular. The PSI domain occupies glutamate 24–proline 74. 28 disulfides stabilise this stretch: cysteine 25–cysteine 43, cysteine 33–cysteine 447, cysteine 36–cysteine 62, cysteine 46–cysteine 73, cysteine 191–cysteine 198, cysteine 246–cysteine 286, cysteine 386–cysteine 400, cysteine 420–cysteine 445, cysteine 449–cysteine 467, cysteine 459–cysteine 470, cysteine 472–cysteine 481, cysteine 483–cysteine 514, cysteine 497–cysteine 512, cysteine 506–cysteine 517, cysteine 519–cysteine 534, cysteine 536–cysteine 559, cysteine 541–cysteine 557, cysteine 549–cysteine 562, cysteine 564–cysteine 573, cysteine 575–cysteine 598, cysteine 582–cysteine 596, cysteine 590–cysteine 601, cysteine 603–cysteine 612, cysteine 615–cysteine 618, cysteine 622–cysteine 662, cysteine 628–cysteine 647, cysteine 631–cysteine 643, and cysteine 670–cysteine 695. N-linked (GlcNAc...) asparagine glycans are attached at residues asparagine 50 and asparagine 116. In terms of domain architecture, VWFA spans glycine 124 to leucine 363. Mg(2+) is bound by residues serine 136 and serine 138. Residues serine 138, aspartate 141, aspartate 142, and aspartate 173 each contribute to the Ca(2+) site. Ca(2+)-binding residues include asparagine 229, aspartate 231, proline 233, and glutamate 234. Position 234 (glutamate 234) interacts with Mg(2+). N-linked (GlcNAc...) asparagine glycosylation is present at asparagine 254. The Ca(2+) site is built by aspartate 264 and glutamate 347. A Cell attachment site motif is present at residues arginine 397–aspartate 399. I-EGF domains are found at residues cysteine 449 to glutamate 482, cysteine 483 to glutamate 535, cysteine 536 to glutamine 574, and cysteine 575 to serine 613. Asparagine 501 is a glycosylation site (N-linked (GlcNAc...) asparagine). A glycan (N-linked (GlcNAc...) asparagine) is linked at asparagine 642. Residues isoleucine 701–tryptophan 723 form a helical membrane-spanning segment. At lysine 724–serine 769 the chain is on the cytoplasmic side. Phosphoserine is present on residues serine 745 and serine 756. A phosphothreonine mark is found at threonine 758 and threonine 760.

The protein belongs to the integrin beta chain family. In terms of assembly, heterodimer of an alpha and a beta subunit. The ITGB2 beta subunit associates with the ITGAL, ITGAM, ITGAX or ITGAD alpha subunits. Found in a complex with CD177 and ITGAM/CD11b. Interacts with FGR. Interacts with COPS5 and RANBP9. Interacts with FLNA (via filamin repeats 4, 9, 12, 17, 19, 21, and 23). Interacts with THBD. In terms of processing, both Ser-745 and Ser-756 become phosphorylated when T-cells are exposed to phorbol esters. Phosphorylation on Thr-758 (but not on Ser-756) allows interaction with 14-3-3 proteins.

The protein localises to the cell membrane. The protein resides in the membrane raft. In terms of biological role, integrin ITGAL/ITGB2 is a receptor for ICAM1, ICAM2, ICAM3 and ICAM4. Integrin ITGAL/ITGB2 is also a receptor for the secreted form of ubiquitin-like protein ISG15; the interaction is mediated by ITGAL. Integrins ITGAM/ITGB2 and ITGAX/ITGB2 are receptors for the iC3b fragment of the third complement component and for fibrinogen. Integrin ITGAX/ITGB2 recognizes the sequence G-P-R in fibrinogen alpha-chain. Integrin ITGAM/ITGB2 recognizes P1 and P2 peptides of fibrinogen gamma chain. Integrin ITGAM/ITGB2 is also a receptor for factor X. Integrin ITGAD/ITGB2 is a receptor for ICAM3 and VCAM1. Contributes to natural killer cell cytotoxicity. Involved in leukocyte adhesion and transmigration of leukocytes including T-cells and neutrophils. Triggers neutrophil transmigration during lung injury through PTK2B/PYK2-mediated activation. Integrin ITGAL/ITGB2 in association with ICAM3, contributes to apoptotic neutrophil phagocytosis by macrophages. This is Integrin beta-2 (ITGB2) from Bos taurus (Bovine).